The chain runs to 781 residues: Mitogen-activated protein kinase 7 (781 aa).

Residues 1–27 (MAEPLKEDDGEDGSGEPPGPVKAEPAG) form a disordered region. N-acetylalanine is present on Ala2. The segment at 2–77 (AEPLKEDDGE…VVSSARRRLT (76 aa)) is required for cytoplasmic targeting. The region spanning 55–347 (YEIIETIGNG…AAAALRHPFL (293 aa)) is the Protein kinase domain. ATP contacts are provided by residues 61 to 69 (IGNGAYGVV) and Lys84. Positions 78–139 (GQQVAIKKIP…FKSVYVVLDL (62 aa)) are required for binding to MAP2K5. The segment at 140–406 (MESDLHQIIH…QQIRFQPSLQ (267 aa)) is necessary for oligomerization. Asp182 (proton acceptor) is an active-site residue. Positions 219–221 (TEY) match the TXY motif. Residues 402-708 (QPSLQPVASE…PKGSGAGYGV (307 aa)) form a disordered region. Residues 407–781 (PVASEPGCPD…LADLPDLQEP (375 aa)) form a may not be required for kinase activity; required to stimulate MEF2C activity region. Pro residues-rich tracts occupy residues 433 to 445 (SPPP…PGPA) and 454 to 463 (QPPPPASEPA). The segment covering 476–486 (KAALKAALLKS) has biased composition (low complexity). Basic and acidic residues-rich tracts occupy residues 502 to 519 (PEPR…EREE), 527 to 544 (RAKE…KERG), and 563 to 573 (DNDRSLLERWT). Residues 505–539 (RKPVTAQERQREREEKRRRRQERAKEREKRRQERE) carry the Nuclear localization signal motif. Pro residues-rich tracts occupy residues 578–594 (PPAP…PPAG) and 601–614 (GPLP…PAPA). Low complexity-rich tracts occupy residues 615 to 632 (AGPA…LAPQ) and 642 to 652 (GPSALSVLPYF). The segment covering 653–664 (PSGPPPPDPGGA) has biased composition (pro residues). The segment covering 668 to 685 (STSESPDVTLVTQQLSKS) has biased composition (polar residues). Residue Ser685 is modified to Phosphoserine. Thr698 is subject to Phosphothreonine.

This sequence belongs to the protein kinase superfamily. CMGC Ser/Thr protein kinase family. MAP kinase subfamily. Interacts with MAP2K5. Forms oligomers. Interacts with MEF2A, MEF2C and MEF2D; the interaction phosphorylates the MEF2s and enhances transcriptional activity of MEF2A, MEF2C but not MEF2D. Interacts with SGK1. Interacts with PML. Interacts (via N-terminal half) with HSP90AB1-CDC37 chaperone complex in resting cells; the interaction is MAP2K5-independent and prevents MAPK7 from ubiquitination and proteasomal degradation. Interacts with STUB1/CHIP; the interaction is enhanced in the presence of IGF1 or MAP2K5 and promotes STUB1/CHIP E3 ligase activity. The cofactor is Mg(2+). In terms of processing, dually phosphorylated on Thr-219 and Tyr-221, which activates the enzyme.

Its subcellular location is the cytoplasm. The protein localises to the nucleus. It localises to the PML body. The enzyme catalyses L-seryl-[protein] + ATP = O-phospho-L-seryl-[protein] + ADP + H(+). The catalysed reaction is L-threonyl-[protein] + ATP = O-phospho-L-threonyl-[protein] + ADP + H(+). With respect to regulation, activated by tyrosine and threonine phosphorylation. Activated in response to hyperosmolarity, hydrogen peroxide, and epidermal growth factor (EGF). Plays a role in various cellular processes such as proliferation, differentiation and cell survival. The upstream activator of MAPK7 is the MAPK kinase MAP2K5. Upon activation, it translocates to the nucleus and phosphorylates various downstream targets including MEF2C. EGF activates MAPK7 through a Ras-independent and MAP2K5-dependent pathway. As part of the MAPK/ERK signaling pathway, acts as a negative regulator of apoptosis in cardiomyocytes via interaction with STUB1/CHIP and promotion of STUB1-mediated ubiquitination and degradation of ICER-type isoforms of CREM. May have a role in muscle cell differentiation. May be important for endothelial function and maintenance of blood vessel integrity. MAP2K5 and MAPK7 interact specifically with one another and not with MEK1/ERK1 or MEK2/ERK2 pathways. Phosphorylates SGK1 at Ser-78 and this is required for growth factor-induced cell cycle progression. Involved in the regulation of p53/TP53 by disrupting the PML-MDM2 interaction. The chain is Mitogen-activated protein kinase 7 (MAPK7) from Bos taurus (Bovine).